We begin with the raw amino-acid sequence, 209 residues long: Inner membrane protein YjdF (209 aa).

The Periplasmic portion of the chain corresponds to 1–7 (MTRTLKP). The chain crosses the membrane as a helical span at residues 8 to 28 (LILNTSALTLTLILIYTGISA). Residues 29-31 (HDK) lie on the Cytoplasmic side of the membrane. The helical transmembrane segment at 32 to 52 (LTWLMEVTPVIIVVQLLLATA) threads the bilayer. Residues 53–55 (RRY) are Periplasmic-facing. The helical transmembrane segment at 56–76 (PLTPLLYTLIFLHAIILMVGG) threads the bilayer. The Cytoplasmic portion of the chain corresponds to 77–131 (QYTYAKVPVGFEVQEWLGLSRNPYDKLGHFFQGLVPALVAREILVRGMYVRGRKM). Residues 132 to 152 (VAFLVCCVALAISAMYELIEW) form a helical membrane-spanning segment. The Periplasmic segment spans residues 153–177 (WAALAMGQGADDFLGTQGDQWDTQS). Residues 178-198 (DMFCALLGALTTVIFLARFHC) traverse the membrane as a helical segment. The Cytoplasmic segment spans residues 199–209 (RQLRRFGLITG).

It localises to the cell inner membrane. This Escherichia coli (strain K12) protein is Inner membrane protein YjdF (yjdF).